The following is a 272-amino-acid chain: 3-methyl-2-oxobutanoate hydroxymethyltransferase (272 aa).

Mg(2+) is bound by residues D52 and D91. Residues 52-53, D91, and K121 each bind 3-methyl-2-oxobutanoate; that span reads DS. Residue E123 coordinates Mg(2+). The Proton acceptor role is filled by E190.

It belongs to the PanB family. In terms of assembly, homodecamer; pentamer of dimers. The cofactor is Mg(2+).

The protein resides in the cytoplasm. The catalysed reaction is 3-methyl-2-oxobutanoate + (6R)-5,10-methylene-5,6,7,8-tetrahydrofolate + H2O = 2-dehydropantoate + (6S)-5,6,7,8-tetrahydrofolate. Its pathway is cofactor biosynthesis; (R)-pantothenate biosynthesis; (R)-pantoate from 3-methyl-2-oxobutanoate: step 1/2. In terms of biological role, catalyzes the reversible reaction in which hydroxymethyl group from 5,10-methylenetetrahydrofolate is transferred onto alpha-ketoisovalerate to form ketopantoate. This chain is 3-methyl-2-oxobutanoate hydroxymethyltransferase, found in Cytophaga hutchinsonii (strain ATCC 33406 / DSM 1761 / CIP 103989 / NBRC 15051 / NCIMB 9469 / D465).